Here is a 431-residue protein sequence, read N- to C-terminus: Dihydroorotase (431 aa).

2 residues coordinate Zn(2+): His-59 and His-61. Residues 61–63 (HLR) and Asn-93 each bind substrate. Positions 151, 178, 231, and 304 each coordinate Zn(2+). Asp-304 is an active-site residue. Substrate-binding positions include His-308 and 322–323 (FG).

The protein belongs to the metallo-dependent hydrolases superfamily. DHOase family. Class I DHOase subfamily. Zn(2+) is required as a cofactor.

The enzyme catalyses (S)-dihydroorotate + H2O = N-carbamoyl-L-aspartate + H(+). The protein operates within pyrimidine metabolism; UMP biosynthesis via de novo pathway; (S)-dihydroorotate from bicarbonate: step 3/3. In terms of biological role, catalyzes the reversible cyclization of carbamoyl aspartate to dihydroorotate. In Caldanaerobacter subterraneus subsp. tengcongensis (strain DSM 15242 / JCM 11007 / NBRC 100824 / MB4) (Thermoanaerobacter tengcongensis), this protein is Dihydroorotase.